The primary structure comprises 327 residues: Aldo-keto reductase family 1 member A1 (327 aa).

NADP(+) is bound by residues 13 to 22 (GQKIPLIGLG), Thr-23, Trp-24, and Asp-47. The Proton donor role is filled by Tyr-52. 12 residues coordinate NADP(+): Ser-164, Asn-165, Ser-213, Leu-215, Ser-217, Lys-265, Ser-266, Val-267, Thr-268, Arg-271, Gln-274, and Asn-275.

Belongs to the aldo/keto reductase family.

It is found in the cytoplasm. It localises to the cytosol. The protein resides in the apical cell membrane. It carries out the reaction a primary alcohol + NADP(+) = an aldehyde + NADPH + H(+). It catalyses the reaction S-nitroso-CoA + NADPH + H(+) = sulfinamide-CoA + NADP(+). The catalysed reaction is S-nitrosoglutathione + NADPH + H(+) = S-(hydroxysulfenamide)glutathione + NADP(+). Catalyzes the NADPH-dependent reduction of a wide variety of carbonyl-containing compounds to their corresponding alcohols. Displays enzymatic activity towards endogenous metabolites such as aromatic and aliphatic aldehydes, ketones, monosaccharides and bile acids. Acts as an aldehyde-detoxification enzyme. Also acts as an inhibitor of protein S-nitrosylation by mediating degradation of S-nitroso-coenzyme A (S-nitroso-CoA), a cofactor required to S-nitrosylate proteins. Also acts as a S-nitroso-glutathione reductase by catalyzing the NADPH-dependent reduction of S-nitrosoglutathione. Displays no reductase activity towards retinoids. This chain is Aldo-keto reductase family 1 member A1 (AKR1A1), found in Gallus gallus (Chicken).